The primary structure comprises 227 residues: Cytochrome c oxidase subunit 2 (227 aa).

Over 1 to 14 the chain is Mitochondrial intermembrane; sequence MAYPFELGFQDATS. Residues 15-45 traverse the membrane as a helical segment; that stretch reads PIMEELLHFHDHTLMIVFLISSLVLYIISLM. Residues 46–59 lie on the Mitochondrial matrix side of the membrane; sequence LTTKLTHTSTMDAQ. Residues 60 to 87 traverse the membrane as a helical segment; it reads EVETIWTILPAIILILIALPSLRILYMM. The Mitochondrial intermembrane segment spans residues 88–227; it reads DEINDPSLTV…HFENWSSSML (140 aa). Cu cation-binding residues include histidine 161, cysteine 196, glutamate 198, cysteine 200, histidine 204, and methionine 207. Mg(2+) is bound at residue glutamate 198.

This sequence belongs to the cytochrome c oxidase subunit 2 family. Component of the cytochrome c oxidase (complex IV, CIV), a multisubunit enzyme composed of 14 subunits. The complex is composed of a catalytic core of 3 subunits MT-CO1, MT-CO2 and MT-CO3, encoded in the mitochondrial DNA, and 11 supernumerary subunits COX4I, COX5A, COX5B, COX6A, COX6B, COX6C, COX7A, COX7B, COX7C, COX8 and NDUFA4, which are encoded in the nuclear genome. The complex exists as a monomer or a dimer and forms supercomplexes (SCs) in the inner mitochondrial membrane with NADH-ubiquinone oxidoreductase (complex I, CI) and ubiquinol-cytochrome c oxidoreductase (cytochrome b-c1 complex, complex III, CIII), resulting in different assemblies (supercomplex SCI(1)III(2)IV(1) and megacomplex MCI(2)III(2)IV(2)). Found in a complex with TMEM177, COA6, COX18, COX20, SCO1 and SCO2. Interacts with TMEM177 in a COX20-dependent manner. Interacts with COX20. Interacts with COX16. It depends on Cu cation as a cofactor.

Its subcellular location is the mitochondrion inner membrane. It carries out the reaction 4 Fe(II)-[cytochrome c] + O2 + 8 H(+)(in) = 4 Fe(III)-[cytochrome c] + 2 H2O + 4 H(+)(out). Component of the cytochrome c oxidase, the last enzyme in the mitochondrial electron transport chain which drives oxidative phosphorylation. The respiratory chain contains 3 multisubunit complexes succinate dehydrogenase (complex II, CII), ubiquinol-cytochrome c oxidoreductase (cytochrome b-c1 complex, complex III, CIII) and cytochrome c oxidase (complex IV, CIV), that cooperate to transfer electrons derived from NADH and succinate to molecular oxygen, creating an electrochemical gradient over the inner membrane that drives transmembrane transport and the ATP synthase. Cytochrome c oxidase is the component of the respiratory chain that catalyzes the reduction of oxygen to water. Electrons originating from reduced cytochrome c in the intermembrane space (IMS) are transferred via the dinuclear copper A center (CU(A)) of subunit 2 and heme A of subunit 1 to the active site in subunit 1, a binuclear center (BNC) formed by heme A3 and copper B (CU(B)). The BNC reduces molecular oxygen to 2 water molecules using 4 electrons from cytochrome c in the IMS and 4 protons from the mitochondrial matrix. The polypeptide is Cytochrome c oxidase subunit 2 (MT-CO2) (Tamias merriami (Merriam's chipmunk)).